A 414-amino-acid polypeptide reads, in one-letter code: Tryptophan synthase beta chain (414 aa).

Position 105 is an N6-(pyridoxal phosphate)lysine (K105).

It belongs to the TrpB family. As to quaternary structure, tetramer of two alpha and two beta chains. Pyridoxal 5'-phosphate is required as a cofactor.

The catalysed reaction is (1S,2R)-1-C-(indol-3-yl)glycerol 3-phosphate + L-serine = D-glyceraldehyde 3-phosphate + L-tryptophan + H2O. The protein operates within amino-acid biosynthesis; L-tryptophan biosynthesis; L-tryptophan from chorismate: step 5/5. Its function is as follows. The beta subunit is responsible for the synthesis of L-tryptophan from indole and L-serine. The protein is Tryptophan synthase beta chain of Gloeobacter violaceus (strain ATCC 29082 / PCC 7421).